We begin with the raw amino-acid sequence, 1286 residues long: Autotransporter adhesin AIDA-I (1286 aa).

Residues 1–49 (MNKAYSIIWSHSRQAWIVASELARGHGFVLAKNTLLVLAVVSTIGNAFA) form the signal peptide. O-alpha-linked (glycero-D-manno-heptose) serine glycans are attached at residues Ser-102, Ser-111, and Ser-116. An O-alpha-linked (glycero-D-manno-heptose) threonine glycan is attached at Thr-154. Ser-242, Ser-252, Ser-334, Ser-391, Ser-409, Ser-539, Ser-545, Ser-558, Ser-569, Ser-576, Ser-577, and Ser-582 each carry an O-alpha-linked (glycero-D-manno-heptose) serine glycan. The Autotransporter domain maps to 998–1286 (TQPESASVWM…SGALGIKYSF (289 aa)). A beta stranded membrane pass occupies residues 1006–1012 (WMKITGG). Residues 1013 to 1029 (ISSGKLNDGQNKTTTNQ) are Extracellular-facing. Residues 1030-1040 (FINQLGGDIYK) traverse the membrane as a beta stranded segment. Residues 1041 to 1047 (FHAEQLG) are Periplasmic-facing. The chain crosses the membrane as a beta stranded span at residues 1048-1058 (DFTLGIMGGYA). The Extracellular segment spans residues 1059–1079 (NAKGKTINYTSNKAARNTLDG). A beta stranded transmembrane segment spans residues 1080–1087 (YSVGVYGT). Topologically, residues 1088-1097 (WYQNGENATG) are periplasmic. Residues 1098–1108 (LFAETWMQYNW) form a beta stranded membrane-spanning segment. Topologically, residues 1109-1126 (FNASVKGDGLEEEKYNLN) are extracellular. The chain crosses the membrane as a beta stranded span at residues 1127–1138 (GLTASAGGGYNL). The Periplasmic portion of the chain corresponds to 1139 to 1152 (NVHTWTSPEGITGE). Residues 1153-1164 (FWLQPHLQAVWM) form a beta stranded membrane-spanning segment. Topologically, residues 1165–1186 (GVTPDTHQEDNGTVVQGAGKNN) are extracellular. The chain crosses the membrane as a beta stranded span at residues 1187-1198 (IQTKAGIRASWK). The Periplasmic portion of the chain corresponds to 1199–1210 (VKSTLDKDTGRR). The chain crosses the membrane as a beta stranded span at residues 1211-1221 (FRPYIEANWIH). At 1222-1242 (NTHEFGVKMSDDSQLLSGSRN) the chain is on the extracellular side. A beta stranded membrane pass occupies residues 1243-1253 (QGEIKTGIEGV). Topologically, residues 1254 to 1259 (ITQNLS) are periplasmic. A beta stranded transmembrane segment spans residues 1260–1267 (VNGGVAYQ). Residues 1268–1275 (AGGHGSNA) lie on the Extracellular side of the membrane. The chain crosses the membrane as a beta stranded span at residues 1276 to 1284 (ISGALGIKY). Topologically, residues 1285-1286 (SF) are periplasmic.

In terms of assembly, intercellular AIDA-AIDA interaction is responsible for bacterial autoaggregation. AIDA can also interact with antigen 43 (Ag43), and the resultant intercellular AIDA-Ag43 interaction causes cell aggregation. Glycosylated on serine residues by AHH and AAH2 in the cytoplasm. Glycosylated with an average of 19 heptose residues. Glycosylated with either ADP-L, D-heptose or ADP-D, D-heptose. Glycosylation is required for protein folding/stabilization and resistance to protease-mediated degradation. Glycosylation is required for bacteria adhesion to mammalian cells. Glycosylation is dispensable for cell outer membrane localization. Glycosylation is dispensable for AIDA-mediated cell-cell aggregation and induction of biofilm formation. Glycosylation is dispensable for interaction with Ag43.

It localises to the periplasm. Its subcellular location is the secreted. It is found in the cell surface. The protein localises to the cell outer membrane. Potent bacterial adhesin that mediates bacterial attachment to a broad variety of human and other mammalian cells. Has additional virulence properties, as it is capable of mediating bacterial autoaggregation via intercellular self-recognition and it is a highly efficient initiator of biofilm formation. The chain is Autotransporter adhesin AIDA-I (aidA) from Escherichia coli.